Here is a 198-residue protein sequence, read N- to C-terminus: Large ribosomal subunit protein bL25 (198 aa).

Belongs to the bacterial ribosomal protein bL25 family. CTC subfamily. Part of the 50S ribosomal subunit; part of the 5S rRNA/L5/L18/L25 subcomplex. Contacts the 5S rRNA. Binds to the 5S rRNA independently of L5 and L18.

In terms of biological role, this is one of the proteins that binds to the 5S RNA in the ribosome where it forms part of the central protuberance. This chain is Large ribosomal subunit protein bL25, found in Streptomyces coelicolor (strain ATCC BAA-471 / A3(2) / M145).